Consider the following 282-residue polypeptide: Bis(5'-nucleosyl)-tetraphosphatase, symmetrical (282 aa).

Belongs to the Ap4A hydrolase family.

The enzyme catalyses P(1),P(4)-bis(5'-adenosyl) tetraphosphate + H2O = 2 ADP + 2 H(+). Its function is as follows. Hydrolyzes diadenosine 5',5'''-P1,P4-tetraphosphate to yield ADP. This Escherichia coli O45:K1 (strain S88 / ExPEC) protein is Bis(5'-nucleosyl)-tetraphosphatase, symmetrical.